A 202-amino-acid polypeptide reads, in one-letter code: ATP-dependent Clp protease proteolytic subunit (202 aa).

Catalysis depends on S101, which acts as the Nucleophile. Residue H126 is part of the active site.

It belongs to the peptidase S14 family. Component of the chloroplastic Clp protease core complex.

It is found in the plastid. Its subcellular location is the chloroplast stroma. The catalysed reaction is Hydrolysis of proteins to small peptides in the presence of ATP and magnesium. alpha-casein is the usual test substrate. In the absence of ATP, only oligopeptides shorter than five residues are hydrolyzed (such as succinyl-Leu-Tyr-|-NHMec, and Leu-Tyr-Leu-|-Tyr-Trp, in which cleavage of the -Tyr-|-Leu- and -Tyr-|-Trp bonds also occurs).. Its function is as follows. Cleaves peptides in various proteins in a process that requires ATP hydrolysis. Has a chymotrypsin-like activity. Plays a major role in the degradation of misfolded proteins. This chain is ATP-dependent Clp protease proteolytic subunit, found in Acorus calamus (Sweet flag).